The sequence spans 1029 residues: Chitin synthase 3 (1029 aa).

Residues 1-29 form a disordered region; it reads MAYYSRPASAGAARAQDDQDPYPYYPDPD. An N-linked (GlcNAc...) asparagine glycan is attached at Asn37. The segment covering 46–71 has biased composition (low complexity); the sequence is ASGAASSASHTSPFSDAHAASASPAS. Disordered stretches follow at residues 46–105 and 168–209; these read ASGA…SRMP and LAHR…AGTS. Residues 76–91 show a composition bias toward polar residues; the sequence is SHQQVSAHAPQQQHMS. Residues 191-202 are compositionally biased toward basic and acidic residues; it reads AHDEKYAYDRPD. 4 N-linked (GlcNAc...) asparagine glycosylation sites follow: Asn401, Asn514, Asn527, and Asn689. The next 7 helical transmembrane spans lie at 723–743, 760–780, 796–816, 830–850, 860–880, 963–983, and 998–1018; these read FYSFVNMCFAWFGLANYYIFF, IGVFNVFMQYIYLGTVVSSFI, AAVVVFALLTVYMMVAAVLCL, AQMVVSLLATYGVYLISSLLA, FLQYLLLAPTYINILNIYAFC, VVLAWALSNGVLAAFILNGDA, and VYMVLVLIFVAGMACIRFIGS.

It belongs to the chitin synthase family. Class I subfamily.

It localises to the cell membrane. The protein resides in the cytoplasmic vesicle membrane. The catalysed reaction is [(1-&gt;4)-N-acetyl-beta-D-glucosaminyl](n) + UDP-N-acetyl-alpha-D-glucosamine = [(1-&gt;4)-N-acetyl-beta-D-glucosaminyl](n+1) + UDP + H(+). In terms of biological role, polymerizes chitin, a structural polymer of the cell wall and septum, by transferring the sugar moiety of UDP-GlcNAc to the non-reducing end of the growing chitin polymer. This is Chitin synthase 3 from Mycosarcoma maydis (Corn smut fungus).